Consider the following 427-residue polypeptide: UPF0229 protein YeaH (427 aa).

Basic and acidic residues predominate over residues asparagine 79 to arginine 90. A disordered region spans residues asparagine 79–glutamate 110. Residues glutamine 92 to glutamine 102 are compositionally biased toward gly residues.

It belongs to the UPF0229 family.

This is UPF0229 protein YeaH from Escherichia coli (strain K12 / MC4100 / BW2952).